The following is a 167-amino-acid chain: Peptide deformylase (167 aa).

2 residues coordinate Fe cation: Cys90 and His132. Glu133 is an active-site residue. His136 provides a ligand contact to Fe cation.

This sequence belongs to the polypeptide deformylase family. Fe(2+) is required as a cofactor.

The catalysed reaction is N-terminal N-formyl-L-methionyl-[peptide] + H2O = N-terminal L-methionyl-[peptide] + formate. In terms of biological role, removes the formyl group from the N-terminal Met of newly synthesized proteins. Requires at least a dipeptide for an efficient rate of reaction. N-terminal L-methionine is a prerequisite for activity but the enzyme has broad specificity at other positions. The sequence is that of Peptide deformylase from Dehalococcoides mccartyi (strain ATCC BAA-2100 / JCM 16839 / KCTC 5957 / BAV1).